The sequence spans 207 residues: 5-nitrosalicylic acid 1,2-dioxygenase (207 aa).

A Cupin type-2 domain is found at 85–151; that stretch reads QLIHPGEEVT…GDKDTLMYVI (67 aa).

It carries out the reaction 5-nitrosalicylate + O2 = 2-oxo-3-(5-oxofuran-2-ylidene)propanoate + nitrite + H(+). Functionally, dioxygenase that catalyzes the cleavage of the aromatic ring of 5-nitrosalicylate (5NSA) without prior removal of the nitro group in biodegradation of 5-nitroanthranilate. This is 5-nitrosalicylic acid 1,2-dioxygenase (naaB) from Bradyrhizobium sp.